A 1159-amino-acid chain; its full sequence is MLDFLAENNLCGQAILRIVSCGNAIIAELLRLSEFIPAVFRLKDRADQQKYGDIIFDFSYFKGPELWESKLDAKPELQDLDEEFRENNIEIVTRFYLAFQSVHKYIVDLNRYLDDLNEGVYIQQTLETVLLNEDGKQLLCEALYLYGVMLLVIDQKIEGEVRERMLVSYYRYSAARSSADSNMDDICKLLRSTGYSSQPGAKRPSNYPESYFQRVPINESFISMVIGRLRSDDIYNQVSAYPLPEHRSTALANQAAMLYVILYFEPSILHTHQAKMREIVDKYFPDNWVISIYMGITVNLVDAWEPYKAAKTALNNTLDLSNVREQASRYATVSERVHAQVQQFLKEGYLREEMVLDNIPKLLNCLRDCNVAIRWLMLHTADSACDPNNKRLRQIKDQILTDSRYNPRILFQLLLDTAQFEFILKEMFKQMLSEKQTKWEHYKKEGSERMTELADVFSGVKPLTRVEKNENLQAWFREISKQILSLNYDDSTAAGRKTVQLIQALEEVQEFHQLESNLQVCQFLADTRKFLHQMIRTINIKEEVLITMQIVGDLSFAWQLIDSFTSIMQESIRVNPSMVTKLRATFLKLASALDLPLLRINQANSPDLLSVSQYYSGELVSYVRKVLQIIPESMFTSLLKIIKLQTHDIIEVPTRLDKDKLRDYAQLGPRYEVAKLTHAISIFTEGILMMKTTLVGIIKVDPKQLLEDGIRKELVKRVAFALHRGLIFNPRAKPSELMPKLKELGATMDGFHRSFEYIQDYVNIYGLKIWQEEVSRIINYNVEQECNNFLRTKIQDWQSMYQSTHIPIPKFTPVDESVTFIGRLCREILRITDPKMTCHIDQLNTWYDMKTHQEVTSSRLFSEIQTTLGTFGLNGLDRLLCFMIVKELQNFLSMFQKIILRDRTVQDTLKTLMNAVSPLKSIVANSNKIYFSAIAKTQKIWTAYLEAIMKVGQMQILRQQIANELNYSCRFDSKHLAAALENLNKALLADIEAHYQDPSLPYPKEDNTLLYEITAYLEAAGIHNPLNKIYITTKRLPYFPIVNFLFLIAQLPKLQYNKNLGMVCRKPTDPVDWPPLVLGLLTLLKQFHSRYTEQFLALIGQFICSTVEQCTSQKIPEIPADVVGALLFLEDYVRYTKLPRRVAEAHVPNFIFDEFRTVL.

Ser-917 carries the phosphoserine modification.

The protein belongs to the strumpellin family. In terms of assembly, component of the WASH core complex also described as WASH regulatory complex (SHRC) composed of WASH (WASHC1, WASH2P or WASH3P), WASHC2 (WASHC2A or WASHC2C), WASHC3, WASHC4 and WASHC5. The WASH core complex associates via WASHC2 with the F-actin-capping protein dimer (formed by CAPZA1, CAPZA2 or CAPZA3 and CAPZB) in a transient or substoichiometric manner which was initially described as WASH complex. Interacts with VCP, PI4K2A. In terms of tissue distribution, expressed ubiquitously.

It localises to the cytoplasm. Its subcellular location is the cytosol. The protein resides in the endoplasmic reticulum. It is found in the early endosome. Acts as a component of the WASH core complex that functions as a nucleation-promoting factor (NPF) at the surface of endosomes, where it recruits and activates the Arp2/3 complex to induce actin polymerization, playing a key role in the fission of tubules that serve as transport intermediates during endosome sorting. May be involved in axonal outgrowth. Involved in cellular localization of ADRB2. Involved in cellular trafficking of BLOC-1 complex cargos such as ATP7A and VAMP7. In Homo sapiens (Human), this protein is WASH complex subunit 5.